We begin with the raw amino-acid sequence, 218 residues long: Host range factor 1 (218 aa).

Its function is as follows. Facilitates AcMNPV replication in two non-permissive cell lines, IPLB-Ld652Y and IPLB-LdFB. This chain is Host range factor 1 (HRF-1), found in Lepidoptera (butterflies and moths).